The sequence spans 193 residues: Recombination protein RecR (193 aa).

Residues 61–76 (CSSCNALSESEVCEIC) form a C4-type zinc finger. Positions 84–170 (SQLCMVLHPR…TFTKIAQGVP (87 aa)) constitute a Toprim domain.

Belongs to the RecR family.

Its function is as follows. May play a role in DNA repair. It seems to be involved in an RecBC-independent recombinational process of DNA repair. It may act with RecF and RecO. The protein is Recombination protein RecR of Helicobacter pylori (strain P12).